Reading from the N-terminus, the 396-residue chain is S-adenosylmethionine synthase (396 aa).

An ATP-binding site is contributed by H16. Position 18 (D18) interacts with Mg(2+). E44 is a binding site for K(+). 2 residues coordinate L-methionine: E57 and Q100. The segment at 100–110 is flexible loop; sequence QSPDIAQGVDR. Residues 167–169, 232–233, D241, 247–248, A264, and K268 contribute to the ATP site; these read DAK, RF, and RK. An L-methionine-binding site is contributed by D241. K272 contacts L-methionine.

Belongs to the AdoMet synthase family. In terms of assembly, homotetramer; dimer of dimers. Requires Mg(2+) as cofactor. It depends on K(+) as a cofactor.

It is found in the cytoplasm. The catalysed reaction is L-methionine + ATP + H2O = S-adenosyl-L-methionine + phosphate + diphosphate. The protein operates within amino-acid biosynthesis; S-adenosyl-L-methionine biosynthesis; S-adenosyl-L-methionine from L-methionine: step 1/1. Its function is as follows. Catalyzes the formation of S-adenosylmethionine (AdoMet) from methionine and ATP. The overall synthetic reaction is composed of two sequential steps, AdoMet formation and the subsequent tripolyphosphate hydrolysis which occurs prior to release of AdoMet from the enzyme. The chain is S-adenosylmethionine synthase from Ralstonia pickettii (strain 12J).